Here is a 308-residue protein sequence, read N- to C-terminus: MSRKVFLVGDGAVGSTFANDLLQNTTVDELAIFDVAKDRPVGDSMDLEDITPFTGQTNIHPAEYSDAKDADVCVITAGVPRKPGETRLDLVNKNVKILKTIVDPVVESGFKGVFVVSANPVDILTTLTQKISGFPKDRVIGTGTSLDSMRLRVELAKKLNVPVAKVNSMVLGEHGDTSFENFDESTVDNKPLRDYSEINDNVLSEIESDVRKKGGKIITNKGATFYGVAMMLTQIVSAILDNRSICLPLSAPINGEYGIKHDLYLGTPTIINGNGIEKVIETKLSDVEKAKMINSADKMQEVLSGVEM.

NAD(+) contacts are provided by residues Val-13, Asp-34, Arg-39, Tyr-64, and 78-79 (GV). Arg-87 is a binding site for substrate. Thr-100 contacts NAD(+). 119 to 122 (NPVD) is a binding site for substrate. Residue Thr-142 participates in NAD(+) binding. Residue 147–150 (DSMR) participates in substrate binding. His-174 acts as the Proton acceptor in catalysis. Thr-224 serves as a coordination point for substrate.

It belongs to the LDH/MDH superfamily. LDH family. Homotetramer.

It localises to the cytoplasm. It catalyses the reaction (S)-lactate + NAD(+) = pyruvate + NADH + H(+). It participates in fermentation; pyruvate fermentation to lactate; (S)-lactate from pyruvate: step 1/1. Functionally, catalyzes the conversion of lactate to pyruvate. The polypeptide is L-lactate dehydrogenase 2 (Lactobacillus acidophilus (strain ATCC 700396 / NCK56 / N2 / NCFM)).